The primary structure comprises 216 residues: Orotidine 5'-phosphate decarboxylase (216 aa).

Residues Asp12, Lys34, Asp62–Thr71, Ser119, Pro172–Lys182, Gly194, and Arg195 each bind substrate. Residue Lys64 is the Proton donor of the active site.

It belongs to the OMP decarboxylase family. Type 1 subfamily. Homodimer.

The enzyme catalyses orotidine 5'-phosphate + H(+) = UMP + CO2. The protein operates within pyrimidine metabolism; UMP biosynthesis via de novo pathway; UMP from orotate: step 2/2. Functionally, catalyzes the decarboxylation of orotidine 5'-monophosphate (OMP) to uridine 5'-monophosphate (UMP). The sequence is that of Orotidine 5'-phosphate decarboxylase from Methanosphaera stadtmanae (strain ATCC 43021 / DSM 3091 / JCM 11832 / MCB-3).